The chain runs to 308 residues: Apolipoprotein E (308 aa).

Positions 1–18 (MKFLWAALVVTLLAGCRA) are cleaved as a signal peptide. A run of 8 repeats spans residues 75-96 (LLIEETMKEVKAYKEELEKQVG), 97-118 (PIAQETQARLSKELQAAQARLE), 119-140 (SDMEDVRTRLAQYRSEAQAALG), 141-162 (QNTDDLQGRLASHLRKLRKRLL), 163-184 (RDAEDLQKRLAVYQAGTHEAAE), 185-206 (RGVSAIHERLGPLMMEGPLQAI), 207-224 (PPSQQLRERAEAWGQKVR), and 225-246 (GRLESVGSQARDRLDDMRDQME). The segment at 75-246 (LLIEETMKEV…RLDDMRDQME (172 aa)) is 8 X 22 AA approximate tandem repeats. An LDL and other lipoprotein receptors binding region spans residues 153–163 (HLRKLRKRLLR). Residue 157–160 (LRKR) coordinates heparin. The tract at residues 205-281 (AIPPSQQLRE…SWFEPLVQDM (77 aa)) is lipid-binding and lipoprotein association. Residue 220–227 (GQKVRGRL) coordinates heparin. Residues 257–308 (SQVRLQAEAFQTRLKSWFEPLVQDMQRQWASLVEKVQSTLGISPSTKPSKTK) form a homooligomerization region. The specificity for association with VLDL stretch occupies residues 269–281 (RLKSWFEPLVQDM).

The protein belongs to the apolipoprotein A1/A4/E family. In terms of assembly, homotetramer. May interact with ABCA1; functionally associated with ABCA1 in the biogenesis of HDLs. May interact with APP/A4 amyloid-beta peptide; the interaction is extremely stable in vitro but its physiological significance is unclear. May interact with MAPT. May interact with MAP2. In the cerebrospinal fluid, interacts with secreted SORL1. Interacts with PMEL; this allows the loading of PMEL luminal fragment on ILVs to induce fibril nucleation. Post-translationally, APOE exists as multiple glycosylated and sialylated glycoforms within cells and in plasma. The extent of glycosylation and sialylation are tissue and context specific. In terms of processing, glycated in plasma VLDL. Phosphorylated by FAM20C in the extracellular medium.

It localises to the secreted. Its subcellular location is the extracellular space. The protein resides in the extracellular matrix. It is found in the extracellular vesicle. The protein localises to the endosome. It localises to the multivesicular body. In terms of biological role, APOE is an apolipoprotein, a protein associating with lipid particles, that mainly functions in lipoprotein-mediated lipid transport between organs via the plasma and interstitial fluids. APOE is a core component of plasma lipoproteins and is involved in their production, conversion and clearance. Apolipoproteins are amphipathic molecules that interact both with lipids of the lipoprotein particle core and the aqueous environment of the plasma. As such, APOE associates with chylomicrons, chylomicron remnants, very low density lipoproteins (VLDL) and intermediate density lipoproteins (IDL) but shows a preferential binding to high-density lipoproteins (HDL). It also binds a wide range of cellular receptors including the LDL receptor/LDLR and the very low-density lipoprotein receptor/VLDLR that mediate the cellular uptake of the APOE-containing lipoprotein particles. Finally, APOE also has a heparin-binding activity and binds heparan-sulfate proteoglycans on the surface of cells, a property that supports the capture and the receptor-mediated uptake of APOE-containing lipoproteins by cells. The chain is Apolipoprotein E (APOE) from Pteropus pselaphon (Bonin flying fox).